The following is a 275-amino-acid chain: 3-deoxy-manno-octulosonate cytidylyltransferase (275 aa).

This sequence belongs to the KdsB family.

The protein resides in the cytoplasm. The enzyme catalyses 3-deoxy-alpha-D-manno-oct-2-ulosonate + CTP = CMP-3-deoxy-beta-D-manno-octulosonate + diphosphate. It participates in nucleotide-sugar biosynthesis; CMP-3-deoxy-D-manno-octulosonate biosynthesis; CMP-3-deoxy-D-manno-octulosonate from 3-deoxy-D-manno-octulosonate and CTP: step 1/1. Its pathway is bacterial outer membrane biogenesis; lipopolysaccharide biosynthesis. Its function is as follows. Activates KDO (a required 8-carbon sugar) for incorporation into bacterial lipopolysaccharide in Gram-negative bacteria. The polypeptide is 3-deoxy-manno-octulosonate cytidylyltransferase (Psychrobacter sp. (strain PRwf-1)).